Reading from the N-terminus, the 157-residue chain is MKCLLIATGERVPTWVAQGFAEYHRRLSYWLPLELVEIEPSMRGKNHDPQRAIEDEGRRVMAALPKQPYAVTLDVKGKPLNSEQLAQRMEHWRGLGRNLVFLIGGPEGHSQEVLNISNERWSLGPLTLPHMLVRLIVVEQLYRAATILTNHPYHRGK.

S-adenosyl-L-methionine is bound by residues Leu-73, Gly-104, and 123 to 128; that span reads LGPLTL.

It belongs to the RNA methyltransferase RlmH family. As to quaternary structure, homodimer.

Its subcellular location is the cytoplasm. The catalysed reaction is pseudouridine(1915) in 23S rRNA + S-adenosyl-L-methionine = N(3)-methylpseudouridine(1915) in 23S rRNA + S-adenosyl-L-homocysteine + H(+). Its function is as follows. Specifically methylates the pseudouridine at position 1915 (m3Psi1915) in 23S rRNA. This is Ribosomal RNA large subunit methyltransferase H from Xylella fastidiosa (strain M12).